The chain runs to 183 residues: Inosine/xanthosine triphosphatase (183 aa).

Position 75 (D75) interacts with Mg(2+). Substrate is bound at residue 75–76; the sequence is DG.

It belongs to the YjjX NTPase family. Homodimer. It depends on Mg(2+) as a cofactor. Mn(2+) is required as a cofactor.

The catalysed reaction is XTP + H2O = XDP + phosphate + H(+). It catalyses the reaction ITP + H2O = IDP + phosphate + H(+). Functionally, phosphatase that hydrolyzes non-canonical purine nucleotides such as XTP and ITP to their respective diphosphate derivatives. Probably excludes non-canonical purines from DNA/RNA precursor pool, thus preventing their incorporation into DNA/RNA and avoiding chromosomal lesions. The chain is Inosine/xanthosine triphosphatase from Vibrio vulnificus (strain YJ016).